The sequence spans 488 residues: GTPase Der (488 aa).

EngA-type G domains are found at residues 3 to 166 and 199 to 372; these read PVVA…AEAM and IKLA…DSAT. Residues 9 to 16, 56 to 60, 118 to 121, 205 to 212, 252 to 256, and 317 to 320 each bind GTP; these read GRPNVGKS, DTGGI, NKVD, GKPNVGKS, DTAGV, and NKWD. The KH-like domain occupies 373–457; sequence RRVSTSMLTR…PIQLRFQEGD (85 aa). Positions 469 to 488 are disordered; it reads MSQERRRKRALSHIKDRKTK. The span at 473-488 shows a compositional bias: basic residues; the sequence is RRRKRALSHIKDRKTK.

This sequence belongs to the TRAFAC class TrmE-Era-EngA-EngB-Septin-like GTPase superfamily. EngA (Der) GTPase family. As to quaternary structure, associates with the 50S ribosomal subunit.

Functionally, GTPase that plays an essential role in the late steps of ribosome biogenesis. The chain is GTPase Der from Shewanella putrefaciens (strain CN-32 / ATCC BAA-453).